The sequence spans 838 residues: Glycogen phosphorylase, brain form (838 aa).

Position 2 is an N-acetylalanine (Ala2). Ser15 carries the phosphoserine modification. AMP-binding residues include Asp43, Tyr197, and Arg310. Tyr197 carries the post-translational modification Phosphotyrosine. Phosphotyrosine is present on Tyr473. The residue at position 524 (Ser524) is a Phosphoserine. Lys569 contacts pyridoxal 5'-phosphate. Residues 677 to 678 (TG) form a pyridoxal 5'-phosphate region. Lys681 bears the N6-(pyridoxal phosphate)lysine mark.

This sequence belongs to the glycogen phosphorylase family. In terms of assembly, homodimer. Dimers associate into a tetramer to form the enzymatically active phosphorylase A. Pyridoxal 5'-phosphate is required as a cofactor. In terms of processing, phosphorylation of Ser-15 converts phosphorylase B (unphosphorylated) to phosphorylase A.

It catalyses the reaction [(1-&gt;4)-alpha-D-glucosyl](n) + phosphate = [(1-&gt;4)-alpha-D-glucosyl](n-1) + alpha-D-glucose 1-phosphate. With respect to regulation, activity of phosphorylase is controlled both by allosteric means (through the non-covalent binding of metabolites) and by covalent modification. Thus AMP allosterically activates, whereas ATP, ADP, and glucose-6-phosphate allosterically inhibit, phosphorylase B. In terms of biological role, glycogen phosphorylase that regulates glycogen mobilization. Phosphorylase is an important allosteric enzyme in carbohydrate metabolism. Enzymes from different sources differ in their regulatory mechanisms and in their natural substrates. However, all known phosphorylases share catalytic and structural properties. In Rattus norvegicus (Rat), this protein is Glycogen phosphorylase, brain form (Pygb).